Consider the following 218-residue polypeptide: MQADFWHARWANNQIGFHLDEINPYLMRHLSRLRLQAGERILVPLCGKTLDLAWLAAQGLEVLGVELSEKAVSDFFEEHDLRPEIDQLGGFRRYRVAGITLLQGDFFALQAEHLAQCRAFYDRAALIALPPEMRERYAGHLQAVLPTRSLGLLVTIDYPQAEMAGPPFAVPDEEVRGYYAGGWRIEELERGDVLGVNWKFLERGVSWLNEAVYLLERG.

4 residues coordinate S-adenosyl-L-methionine: W10, L45, E66, and R123.

It belongs to the class I-like SAM-binding methyltransferase superfamily. TPMT family.

Its subcellular location is the cytoplasm. The catalysed reaction is S-adenosyl-L-methionine + a thiopurine = S-adenosyl-L-homocysteine + a thiopurine S-methylether.. In Pseudomonas aeruginosa (strain UCBPP-PA14), this protein is Thiopurine S-methyltransferase.